The following is a 620-amino-acid chain: 1-deoxy-D-xylulose-5-phosphate synthase (620 aa).

Residues His80 and 121–123 each bind thiamine diphosphate; that span reads GHS. Residue Asp152 participates in Mg(2+) binding. Residues 153–154, Asn181, Tyr288, and Glu370 contribute to the thiamine diphosphate site; that span reads GA. Asn181 contacts Mg(2+).

This sequence belongs to the transketolase family. DXPS subfamily. Homodimer. It depends on Mg(2+) as a cofactor. Thiamine diphosphate is required as a cofactor.

The enzyme catalyses D-glyceraldehyde 3-phosphate + pyruvate + H(+) = 1-deoxy-D-xylulose 5-phosphate + CO2. It functions in the pathway metabolic intermediate biosynthesis; 1-deoxy-D-xylulose 5-phosphate biosynthesis; 1-deoxy-D-xylulose 5-phosphate from D-glyceraldehyde 3-phosphate and pyruvate: step 1/1. In terms of biological role, catalyzes the acyloin condensation reaction between C atoms 2 and 3 of pyruvate and glyceraldehyde 3-phosphate to yield 1-deoxy-D-xylulose-5-phosphate (DXP). This is 1-deoxy-D-xylulose-5-phosphate synthase from Enterobacter sp. (strain 638).